We begin with the raw amino-acid sequence, 210 residues long: Thymidylate kinase (210 aa).

10-17 (GIDGCGKT) serves as a coordination point for ATP.

The protein belongs to the thymidylate kinase family.

The enzyme catalyses dTMP + ATP = dTDP + ADP. In terms of biological role, phosphorylation of dTMP to form dTDP in both de novo and salvage pathways of dTTP synthesis. This Prochlorococcus marinus (strain MIT 9515) protein is Thymidylate kinase.